The primary structure comprises 392 residues: G2/mitotic-specific cyclin-B2 (392 aa).

The protein belongs to the cyclin family. Cyclin AB subfamily. As to quaternary structure, interacts with the CDK1 protein kinase to form a serine/threonine kinase holoenzyme complex also known as maturation promoting factor (MPF). The cyclin subunit imparts substrate specificity to the complex.

In terms of biological role, essential for the control of the cell cycle at the G2/M (mitosis) transition. The polypeptide is G2/mitotic-specific cyclin-B2 (CCNB2) (Rana japonica (Japanese reddish frog)).